Consider the following 449-residue polypeptide: Bifunctional protein GlmU (449 aa).

The interval 1-226 (MVAVAILAAG…FQEISGINDR (226 aa)) is pyrophosphorylase. Residues 7–10 (LAAG), lysine 21, glutamine 73, and 78–79 (GT) each bind UDP-N-acetyl-alpha-D-glucosamine. Aspartate 103 contributes to the Mg(2+) binding site. Glycine 140, glutamate 155, asparagine 170, and asparagine 224 together coordinate UDP-N-acetyl-alpha-D-glucosamine. Asparagine 224 is a Mg(2+) binding site. A linker region spans residues 227-247 (FQLSAAYEILQDRIKEKWMKA). The tract at residues 248–449 (GVMIHQPDTV…KEIKGWRLQS (202 aa)) is N-acetyltransferase. The UDP-N-acetyl-alpha-D-glucosamine site is built by arginine 329 and lysine 347. The active-site Proton acceptor is the histidine 359. 2 residues coordinate UDP-N-acetyl-alpha-D-glucosamine: tyrosine 362 and asparagine 373. Acetyl-CoA contacts are provided by residues alanine 376, 382-383 (NY), alanine 419, and arginine 436.

The protein in the N-terminal section; belongs to the N-acetylglucosamine-1-phosphate uridyltransferase family. In the C-terminal section; belongs to the transferase hexapeptide repeat family. In terms of assembly, homotrimer. It depends on Mg(2+) as a cofactor.

Its subcellular location is the cytoplasm. The enzyme catalyses alpha-D-glucosamine 1-phosphate + acetyl-CoA = N-acetyl-alpha-D-glucosamine 1-phosphate + CoA + H(+). The catalysed reaction is N-acetyl-alpha-D-glucosamine 1-phosphate + UTP + H(+) = UDP-N-acetyl-alpha-D-glucosamine + diphosphate. Its pathway is nucleotide-sugar biosynthesis; UDP-N-acetyl-alpha-D-glucosamine biosynthesis; N-acetyl-alpha-D-glucosamine 1-phosphate from alpha-D-glucosamine 6-phosphate (route II): step 2/2. It functions in the pathway nucleotide-sugar biosynthesis; UDP-N-acetyl-alpha-D-glucosamine biosynthesis; UDP-N-acetyl-alpha-D-glucosamine from N-acetyl-alpha-D-glucosamine 1-phosphate: step 1/1. The protein operates within bacterial outer membrane biogenesis; LPS lipid A biosynthesis. Functionally, catalyzes the last two sequential reactions in the de novo biosynthetic pathway for UDP-N-acetylglucosamine (UDP-GlcNAc). The C-terminal domain catalyzes the transfer of acetyl group from acetyl coenzyme A to glucosamine-1-phosphate (GlcN-1-P) to produce N-acetylglucosamine-1-phosphate (GlcNAc-1-P), which is converted into UDP-GlcNAc by the transfer of uridine 5-monophosphate (from uridine 5-triphosphate), a reaction catalyzed by the N-terminal domain. The polypeptide is Bifunctional protein GlmU (Picosynechococcus sp. (strain ATCC 27264 / PCC 7002 / PR-6) (Agmenellum quadruplicatum)).